Consider the following 122-residue polypeptide: Large ribosomal subunit protein uL14 (122 aa).

This sequence belongs to the universal ribosomal protein uL14 family. In terms of assembly, part of the 50S ribosomal subunit. Forms a cluster with proteins L3 and L19. In the 70S ribosome, L14 and L19 interact and together make contacts with the 16S rRNA in bridges B5 and B8.

Binds to 23S rRNA. Forms part of two intersubunit bridges in the 70S ribosome. This chain is Large ribosomal subunit protein uL14, found in Chlorobaculum parvum (strain DSM 263 / NCIMB 8327) (Chlorobium vibrioforme subsp. thiosulfatophilum).